The sequence spans 397 residues: Sulfate adenylyltransferase (397 aa).

Belongs to the sulfate adenylyltransferase family.

The catalysed reaction is sulfate + ATP + H(+) = adenosine 5'-phosphosulfate + diphosphate. It participates in sulfur metabolism; hydrogen sulfide biosynthesis; sulfite from sulfate: step 1/3. The chain is Sulfate adenylyltransferase (sat) from Allochromatium vinosum (strain ATCC 17899 / DSM 180 / NBRC 103801 / NCIMB 10441 / D) (Chromatium vinosum).